A 234-amino-acid polypeptide reads, in one-letter code: Small ribosomal subunit protein uS3 (234 aa).

Positions 39–107 (IRKFLKKELY…EVSINIKEVK (69 aa)) constitute a KH type-2 domain.

It belongs to the universal ribosomal protein uS3 family. As to quaternary structure, part of the 30S ribosomal subunit. Forms a tight complex with proteins S10 and S14.

Binds the lower part of the 30S subunit head. Binds mRNA in the 70S ribosome, positioning it for translation. The sequence is that of Small ribosomal subunit protein uS3 from Helicobacter pylori (strain G27).